The following is a 439-amino-acid chain: Divalent metal cation transporter MntH (439 aa).

Helical transmembrane passes span G32 to D52, G67 to L87, I121 to L141, M144 to E164, L173 to T193, A214 to H234, V261 to G281, A301 to I321, A350 to L370, V371 to F391, and F406 to I426.

This sequence belongs to the NRAMP family.

It localises to the cell inner membrane. In terms of biological role, h(+)-stimulated, divalent metal cation uptake system. This Verminephrobacter eiseniae (strain EF01-2) protein is Divalent metal cation transporter MntH.